The sequence spans 446 residues: Glucose-6-phosphate isomerase (446 aa).

Catalysis depends on Glu-288, which acts as the Proton donor. Catalysis depends on residues His-309 and Lys-423.

It belongs to the GPI family.

The protein resides in the cytoplasm. It catalyses the reaction alpha-D-glucose 6-phosphate = beta-D-fructose 6-phosphate. Its pathway is carbohydrate biosynthesis; gluconeogenesis. It functions in the pathway carbohydrate degradation; glycolysis; D-glyceraldehyde 3-phosphate and glycerone phosphate from D-glucose: step 2/4. Its function is as follows. Catalyzes the reversible isomerization of glucose-6-phosphate to fructose-6-phosphate. This Lacticaseibacillus casei (strain BL23) (Lactobacillus casei) protein is Glucose-6-phosphate isomerase.